The chain runs to 2803 residues: Microtubule-associated protein 1A (2803 aa).

5 positions are modified to phosphoserine: Ser-114, Ser-117, Ser-118, Ser-121, and Ser-155. Tyr-177 carries the post-translational modification Phosphotyrosine. Disordered stretches follow at residues 302 to 466 (GAVP…DLKP) and 486 to 516 (IDRSRAIRGEKELSSEPQTPPAQKGTVPLPT). Residues Ser-319, Ser-322, and Ser-384 each carry the phosphoserine modification. Over residues 335–390 (AKREEVVEEGAKEARSELAKELAKTEKKAKESSEKPPEKPAKPERVKTESSEALKA) the composition is skewed to basic and acidic residues. Positions 391 to 406 (EKRKLIKDKVGKKHLK) are enriched in basic residues. Basic and acidic residues-rich tracts occupy residues 407-464 (EKIS…KPDL) and 486-499 (IDRSRAIRGEKELS). 8 repeat units span residues 415-417 (KKD), 420-422 (KKE), 427-429 (RKE), 431-433 (KKD), 436-438 (RKE), 440-442 (KKD), 444-446 (KKE), and 449-451 (RKD). Residues 415–541 (KKDKEKKEIK…TQDFEEMKRE (127 aa)) are 9 X 3 AA repeats of K-K-[DE]. At Thr-504 the chain carries Phosphothreonine. A phosphoserine mark is found at Ser-526 and Ser-527. Repeat 9 spans residues 539-541 (KRE). Composition is skewed to basic and acidic residues over residues 539–554 (KREERALLAEQRDTGL) and 585–596 (QEEHVMKEKELV). Disordered stretches follow at residues 539 to 712 (KREE…KAPE), 734 to 806 (YIQD…GTPE), 847 to 1080 (EDQS…VNID), 1109 to 1548 (TGPI…EKKD), and 1573 to 1605 (EENHQTQEQESLVQEDKTRKPKMLEEKSPEKVK). A phosphoserine mark is found at Ser-605 and Ser-612. Thr-616 bears the Phosphothreonine mark. The segment covering 623–667 (WEEKKQREAERLPDRTEAREESEPEVKEDVIEKAELEEMEEVHPS) has biased composition (basic and acidic residues). A phosphoserine mark is found at Ser-644, Ser-667, and Ser-787. 2 stretches are compositionally biased toward polar residues: residues 847-860 (EDQSVASLTAPQTE) and 871-883 (TVTSIPSSRTEAT). Residues Ser-874, Ser-877, Ser-878, and Ser-891 each carry the phosphoserine modification. A Phosphothreonine modification is found at Thr-894. Ser-896, Ser-900, Ser-909, Ser-986, Ser-996, Ser-1004, Ser-1013, Ser-1019, and Ser-1029 each carry phosphoserine. Over residues 1031-1065 (GDTKRTPGVGKEDAAEETVKPGPEEGTLEKEEKVP) the composition is skewed to basic and acidic residues. A phosphoserine mark is found at Ser-1069, Ser-1144, Ser-1146, Ser-1160, Ser-1172, Ser-1190, Ser-1200, Ser-1203, Ser-1209, Ser-1218, Ser-1221, and Ser-1264. Basic and acidic residues predominate over residues 1131 to 1146 (KPQKDEVLRYPDRSLS). Residues 1154 to 1169 (SVLSVPSPDTANQEPT) are compositionally biased toward polar residues. Polar residues-rich tracts occupy residues 1211 to 1224 (DVSSKQLSPESLGT) and 1264 to 1278 (SPPTDGTTRYSAQTD). Low complexity predominate over residues 1289–1299 (PASSFSHSTPS). Ser-1326, Ser-1329, Ser-1544, Ser-1600, and Ser-1626 each carry phosphoserine. 2 stretches are compositionally biased toward basic and acidic residues: residues 1338–1548 (IAIK…EKKD) and 1586–1605 (QEDKTRKPKMLEEKSPEKVK). The segment covering 1632–1642 (RAREQEEKYWR) has biased composition (basic and acidic residues). Disordered stretches follow at residues 1632–1684 (RARE…RYWR), 1713–1879 (DGQG…FSWG), and 1892–2673 (EGAA…LVNG). Phosphoserine is present on Ser-1654. A compositionally biased stretch (basic and acidic residues) spans 1655–1666 (PTREEPAGEQKE). A phosphoserine mark is found at Ser-1675, Ser-1749, Ser-1762, Ser-1776, Ser-1791, Ser-1797, Ser-1801, Ser-1812, and Ser-1818. Residues 1852–1867 (LPPAPLSPAPGPPTPA) show a composition bias toward pro residues. Over residues 1907–1929 (KDYRKAEGEREEEGRAEAPDKSS) the composition is skewed to basic and acidic residues. At Ser-1931 the chain carries Phosphoserine. Positions 1951–1964 (PEQREPTPYPDERS) are enriched in basic and acidic residues. The residue at position 1957 (Thr-1957) is a Phosphothreonine. Polar residues predominate over residues 2019–2033 (SPISPKSLQSDTPTF). A Phosphoserine modification is found at Ser-2022. A compositionally biased stretch (pro residues) spans 2042–2066 (TVPPRPEPGPSMEPSLTPPAVPPRA). Phosphothreonine is present on Thr-2058. Ser-2074, Ser-2104, Ser-2106, and Ser-2108 each carry phosphoserine. The segment covering 2086 to 2122 (PDRRSPSPKESGRSHWDDSTSDSELEKGAREQPEKEA) has biased composition (basic and acidic residues). Residues 2175-2184 (PAPPQLPSPA) show a composition bias toward pro residues. A phosphoserine mark is found at Ser-2235, Ser-2252, Ser-2256, Ser-2259, and Ser-2260. Residues 2257–2268 (EGSSSEATTPVI) show a composition bias toward polar residues. Low complexity predominate over residues 2312–2325 (ASLDLALAPAPSLP). Residue Ser-2449 is modified to Phosphoserine. The segment covering 2461 to 2473 (IDDRDLSTEEVRL) has biased composition (basic and acidic residues). Residues 2502–2514 (SASDSGSSQSDSD) show a composition bias toward low complexity. Residues 2559–2575 (DPPPLPQPDPRPSPPRP) show a composition bias toward pro residues. Basic and acidic residues predominate over residues 2590–2602 (GRVERLREKEKVQ). Residues Ser-2649 and Ser-2664 each carry the phosphoserine modification.

The protein belongs to the MAP1 family. As to quaternary structure, 3 different light chains, LC1 (a cleavage product of MAP1B), LC2 (a cleavage product of MAP1A) and LC3 (produced by one of the MAP1LC3 genes), can associate with the MAP1A or MAP1B heavy chains. Interacts with TIAM2. Interacts with guanylate kinase-like domain of DLG1, DLG2 and DLG4. Binds to CSNK1D. In terms of assembly, interacts with ELAVL4. In terms of processing, phosphorylated by CSNK1D. Post-translationally, LC2 is generated from MAP1A by proteolytic processing. In terms of tissue distribution, brain.

The protein resides in the cytoplasm. It is found in the cytoskeleton. Functionally, structural protein involved in the filamentous cross-bridging between microtubules and other skeletal elements. In Homo sapiens (Human), this protein is Microtubule-associated protein 1A (MAP1A).